A 318-amino-acid chain; its full sequence is MSYPLFDKDEHWHKPEQAFLTDDHRTILRFAVEALMSGKGAVLVTLVEIRGGAARPLGAQMVVREDGRYCGFVSGGCVEAAAAFEALEMMGSGRDREIRYGEGSPWFDIVLPCGGGITLTLHKLRSAQPLLAVLNRLEQRKPVGLRYDPQAQSLVCLPTQTRTGWNLNGFEVGFRPCVRLMIYGRSLEAQATASLAAATGYDSHIFDLFPASASAQIDTDTAVILLCHDLNRELPVLQAAREAKPFYLGALGSYRTHTLRLQKLHELGWSREETTQIRAPVGIFPKARDAHTLALSVLAEVASVRLHQEEDSCLPPSS.

As to quaternary structure, homodimer in solution. Interacts with MocA.

Its function is as follows. Chaperone required for the production of an active PaoABC aldehyde oxidoreductase. Stabilizes the PaoC subunit and is required for the insertion of the molybdenum cofactor into this subunit. Binds molybdenum cofactor. Binds the molybdopterin cytosine dinucleotide (MCD) form of the cofactor after its formation by the molybdenum cofactor cytidylyltransferase MocA. The polypeptide is Molybdenum cofactor insertion chaperone PaoD (Escherichia coli (strain K12)).